A 303-amino-acid polypeptide reads, in one-letter code: 4-hydroxy-tetrahydrodipicolinate synthase (303 aa).

Residue Thr57 participates in pyruvate binding. The Proton donor/acceptor role is filled by Tyr143. Catalysis depends on Lys171, which acts as the Schiff-base intermediate with substrate. Ile211 is a binding site for pyruvate.

This sequence belongs to the DapA family. Homotetramer; dimer of dimers.

The protein localises to the cytoplasm. The catalysed reaction is L-aspartate 4-semialdehyde + pyruvate = (2S,4S)-4-hydroxy-2,3,4,5-tetrahydrodipicolinate + H2O + H(+). It functions in the pathway amino-acid biosynthesis; L-lysine biosynthesis via DAP pathway; (S)-tetrahydrodipicolinate from L-aspartate: step 3/4. In terms of biological role, catalyzes the condensation of (S)-aspartate-beta-semialdehyde [(S)-ASA] and pyruvate to 4-hydroxy-tetrahydrodipicolinate (HTPA). The chain is 4-hydroxy-tetrahydrodipicolinate synthase from Bifidobacterium animalis subsp. lactis (strain AD011).